Consider the following 396-residue polypeptide: Putative arsenical pump-driving ATPase 1 (396 aa).

Residue 8-15 coordinates ATP; the sequence is GKGGVGKT.

It belongs to the arsA ATPase family.

The enzyme catalyses arsenite(in) + ATP + H2O = arsenite(out) + ADP + phosphate + H(+). Anion-transporting ATPase. Catalyzes the extrusion of arsenite. This chain is Putative arsenical pump-driving ATPase 1 (arsA1), found in Aquifex aeolicus (strain VF5).